The following is a 387-amino-acid chain: Succinyl-diaminopimelate desuccinylase (387 aa).

H75 lines the Zn(2+) pocket. D77 is an active-site residue. A Zn(2+)-binding site is contributed by D108. E139 acts as the Proton acceptor in catalysis. Residues E140, E168, and H357 each contribute to the Zn(2+) site.

It belongs to the peptidase M20A family. DapE subfamily. In terms of assembly, homodimer. Zn(2+) serves as cofactor. Requires Co(2+) as cofactor.

It catalyses the reaction N-succinyl-(2S,6S)-2,6-diaminopimelate + H2O = (2S,6S)-2,6-diaminopimelate + succinate. It functions in the pathway amino-acid biosynthesis; L-lysine biosynthesis via DAP pathway; LL-2,6-diaminopimelate from (S)-tetrahydrodipicolinate (succinylase route): step 3/3. Functionally, catalyzes the hydrolysis of N-succinyl-L,L-diaminopimelic acid (SDAP), forming succinate and LL-2,6-diaminopimelate (DAP), an intermediate involved in the bacterial biosynthesis of lysine and meso-diaminopimelic acid, an essential component of bacterial cell walls. In Caulobacter sp. (strain K31), this protein is Succinyl-diaminopimelate desuccinylase.